Reading from the N-terminus, the 61-residue chain is MAKKALIVKAQRKPKFAVRAYTRCNRCGRPHSVYRKFGLCRLCLREMAHRGELPGVTKSSW.

C24, C27, C40, and C43 together coordinate Zn(2+).

Belongs to the universal ribosomal protein uS14 family. Zinc-binding uS14 subfamily. Part of the 30S ribosomal subunit. Contacts proteins S3 and S10. The cofactor is Zn(2+).

Functionally, binds 16S rRNA, required for the assembly of 30S particles and may also be responsible for determining the conformation of the 16S rRNA at the A site. The sequence is that of Small ribosomal subunit protein uS14 from Acidothermus cellulolyticus (strain ATCC 43068 / DSM 8971 / 11B).